Consider the following 231-residue polypeptide: Ribosomal RNA small subunit methyltransferase nep-1 (231 aa).

S-adenosyl-L-methionine contacts are provided by residues methionine 161, glycine 188, glycine 193, and 206 to 211 (ISNYPL).

Belongs to the class IV-like SAM-binding methyltransferase superfamily. RNA methyltransferase NEP1 family. As to quaternary structure, homodimer.

Its subcellular location is the nucleus. It localises to the nucleolus. The catalysed reaction is a pseudouridine in rRNA + S-adenosyl-L-methionine = an N(1)-methylpseudouridine in rRNA + S-adenosyl-L-homocysteine + H(+). Functionally, S-adenosyl-L-methionine-dependent pseudouridine N(1)-methyltransferase that methylates a pseudouridine in 18S rRNA. Involved the biosynthesis of the hypermodified N1-methyl-N3-(3-amino-3-carboxypropyl) pseudouridine (m1acp3-Psi) conserved in eukaryotic 18S rRNA. Also has an essential role in 40S ribosomal subunit biogenesis independent on its methyltransferase activity, facilitating the incorporation of ribosomal protein S19 during the formation of pre-ribosomes. This chain is Ribosomal RNA small subunit methyltransferase nep-1, found in Caenorhabditis elegans.